The primary structure comprises 711 residues: Zinc finger CCCH domain-containing protein 43 (711 aa).

The segment at 1 to 49 (MPQDDDWFWGRPTPVVVGDGETTSKPKPPVAGKTKKVEEQHPRRPGEPD) is disordered. Over residues 35 to 47 (KKVEEQHPRRPGE) the composition is skewed to basic and acidic residues. 3 consecutive C3H1-type zinc fingers follow at residues 44–72 (RPGEPDCSYYVKFGSCKFGISCVYNHPDP), 90–118 (RPGEPDCSYYVKFGSCKFGMNCRFNHPPR), and 157–185 (RPGTGLCSYYMNRGICKFGTNCKFDHPDP). Residues 384 to 637 (LKTLKSILNT…GAISYLIEKE (254 aa)) enclose the MIF4G domain.

The chain is Zinc finger CCCH domain-containing protein 43 from Oryza sativa subsp. japonica (Rice).